The chain runs to 313 residues: MVGKGGYRQINKALNICAFEDYLDGQQKSLPPLNDVEQISPNVLRVLGQNPGKFTLQGTNTYIIGTGEKRLLIDTGQGIPEWADLISSTLANSSIRLSAVLLSHWHGDHTGGVPDLLRLYPHLSDSIYKHSPSKGQQPIEDGQVFEVEGATVRAVHAPGHSHDHMCFVIEEENAMFTGDNVLGHGTAAVELLSTWMATLRLMQSHNCGRGYPAHGEVIPNLNAKISGELASKERRERQVLQHLNRIRKEEQGGKGSATVQRLVVEMYGDTDQQMREQALEPFIDEVLRKLAEDEKVAFQLRAGEKTWFAIALE.

Positions 104, 106, 108, and 109 each coordinate Zn(2+). Asp108 functions as the Proton donor/acceptor in the catalytic mechanism.

This sequence belongs to the metallo-beta-lactamase superfamily. Requires Zn(2+) as cofactor.

The enzyme catalyses atrochrysone carboxyl-[ACP] + H2O = atrochrysone carboxylate + holo-[ACP] + H(+). Its pathway is secondary metabolite biosynthesis. In terms of biological role, lactamase-like protein; part of the gene cluster that mediates the biosynthesis of pestheic acid, a diphenyl ether which is a biosynthetic precursor of the unique chloropupukeananes. The biosynthesis initiates from condensation of acetate and malonate units catalyzed by the non-reducing PKS ptaA. As the ptaA protein is TE/CLC domain-deficient, hydrolysis and Claisen cyclization of the polyketide could be catalyzed by ptaB containing a beta-lactamase domain. The ptaB protein might hydrolyze the thioester bond between the ACP of ptaA and the intermediate to release atrochrysone carboxylic acid, which is spontaneously dehydrated to form endocrocin anthrone. Endocrocin anthrone is then converted to endocrocin, catalyzed by the anthrone oxygenase ptaC. Spontaneous decarboxylation of endocrocin occurs to generate emodin. An O-methyltransferase (ptaH or ptaI) could methylate emodin to form physcion. PtaJ could then catalyze the oxidative cleavage of physcion, and rotation of the intermediate could then afford desmethylisosulochrin. PtaF, a putative NADH-dependent oxidoreductase, might also participate in the oxidative cleavage step. Desmethylisosulochrin is then transformed by another O-methyltransferase (ptaH or ptaI) to form isosulochrin. Chlorination of isosulochrin by ptaM in the cyclohexadienone B ring then produces chloroisosulochrin. PtaE is responsible for the oxidative coupling reactions of both benzophenones isosulochrin and chloroisosulochrin to RES-1214-1 and pestheic acid respectively, regardless of chlorination. The protein is Lactamase-like protein ptaB of Pestalotiopsis fici (strain W106-1 / CGMCC3.15140).